The sequence spans 344 residues: Biotin synthase (344 aa).

Positions 40 to 267 constitute a Radical SAM core domain; the sequence is AEVQVSTLLS…KSMVRLSAGR (228 aa). [4Fe-4S] cluster contacts are provided by Cys-55, Cys-59, and Cys-62. The [2Fe-2S] cluster site is built by Cys-99, Cys-130, Cys-190, and Arg-262.

The protein belongs to the radical SAM superfamily. Biotin synthase family. In terms of assembly, homodimer. [4Fe-4S] cluster serves as cofactor. It depends on [2Fe-2S] cluster as a cofactor.

It carries out the reaction (4R,5S)-dethiobiotin + (sulfur carrier)-SH + 2 reduced [2Fe-2S]-[ferredoxin] + 2 S-adenosyl-L-methionine = (sulfur carrier)-H + biotin + 2 5'-deoxyadenosine + 2 L-methionine + 2 oxidized [2Fe-2S]-[ferredoxin]. Its pathway is cofactor biosynthesis; biotin biosynthesis; biotin from 7,8-diaminononanoate: step 2/2. Functionally, catalyzes the conversion of dethiobiotin (DTB) to biotin by the insertion of a sulfur atom into dethiobiotin via a radical-based mechanism. The polypeptide is Biotin synthase (Xanthomonas campestris pv. campestris (strain 8004)).